Reading from the N-terminus, the 94-residue chain is Large ribosomal subunit protein bL25 (94 aa).

It belongs to the bacterial ribosomal protein bL25 family. As to quaternary structure, part of the 50S ribosomal subunit; part of the 5S rRNA/L5/L18/L25 subcomplex. Contacts the 5S rRNA. Binds to the 5S rRNA independently of L5 and L18.

Functionally, this is one of the proteins that binds to the 5S RNA in the ribosome where it forms part of the central protuberance. The protein is Large ribosomal subunit protein bL25 of Yersinia pestis bv. Antiqua (strain Antiqua).